The sequence spans 334 residues: HTH-type transcriptional repressor PurR (334 aa).

The HTH lacI-type domain maps to 2–56 (ATIKDVARLAGVSTTTVSHVINKTRFVAEATQEKVMKAVDELNYAPSAVARSLKC). Positions 4–23 (IKDVARLAGVSTTTVSHVIN) form a DNA-binding region, H-T-H motif. The DNA-binding element occupies 48–56 (SAVARSLKC). Positions 73, 189, 220, and 274 each coordinate hypoxanthine.

In terms of assembly, homodimer.

The protein operates within purine metabolism; purine nucleotide biosynthesis [regulation]. Its function is as follows. Is the main repressor of the genes involved in the de novo synthesis of purine nucleotides, regulating purB, purC, purEK, purF, purHD, purL, purMN and guaBA expression. PurR is allosterically activated to bind its cognate DNA by binding the purine corepressors, hypoxanthine or guanine, thereby effecting transcription repression. The chain is HTH-type transcriptional repressor PurR from Vibrio vulnificus (strain CMCP6).